Consider the following 254-residue polypeptide: Protein orai-2 (254 aa).

The next 4 membrane-spanning stretches (helical) occupy residues threonine 66 to leucine 83, leucine 94 to isoleucine 114, leucine 148 to leucine 168, and alanine 196 to isoleucine 216.

It belongs to the Orai family. As to quaternary structure, oligomerizes in homomeric and heteromeric ORAI complexes. Native CRAC channels most likely consist of hexameric ORAI heteromers, implying that diverse ORAI1, ORAI2 and ORAI3 subunit combinations with distinct biophysical properties can operate in a cell-type specific way. Interacts with STIM1; this regulates channel activity. Interacts with CRACR2A/EFCAB4B.

The protein localises to the cell membrane. It catalyses the reaction Ca(2+)(in) = Ca(2+)(out). CRAC channels are regulated by fast Ca(2+)-dependent inactivation (FCDI), a mechanism that limits Ca(2+) influx and cell toxicity. ORAI2 channels display prominent FCDI. Inhibited by lanthanides such as Gd(3+) ions. Functionally, pore-forming subunit of inward rectifying Ca(2+) release-activated Ca(2+) (CRAC) channels. Assembles with ORAI1 and ORAI3 to form hexameric CRAC channels that mediate Ca(2+) influx upon depletion of endoplasmic reticulum Ca(2+) store and channel activation by Ca(2+) sensor STIM1, a process known as store-operated Ca(2+) entry (SOCE). Various pore subunit combinations may account for distinct CRAC channel spatiotemporal and cell-type specific dynamics. ORAI1 mainly contributes to the generation of Ca(2+) plateaus involved in sustained Ca(2+) entry and is dispensable for cytosolic Ca(2+) oscillations, whereas ORAI2 and ORAI3 generate oscillatory patterns. CRAC channels assemble in Ca(2+) signaling microdomains where Ca(2+) influx is coupled to calmodulin and calcineurin signaling and activation of NFAT transcription factors recruited to ORAI1 via AKAP5. CRAC channels are the main pathway for Ca(2+) influx in T cells and promote the immune response to pathogens by activating NFAT-dependent cytokine and chemokine transcription. The polypeptide is Protein orai-2 (ORAI2) (Homo sapiens (Human)).